A 740-amino-acid polypeptide reads, in one-letter code: Catalase-peroxidase (740 aa).

Residues 1–27 (MFKSTLPIAAAISVALTSMVLPAKALA) form the signal peptide. The segment at residues 106-228 (WHSAGVYRVH…LAAVEMGLIY (123 aa)) is a cross-link (tryptophyl-tyrosyl-methioninium (Trp-Tyr) (with M-254)). Residue His107 is the Proton acceptor of the active site. The tryptophyl-tyrosyl-methioninium (Tyr-Met) (with W-106) cross-link spans 228–254 (YVNPEGPHGKPDPLLAANDIRMSFGRM). Residue His269 participates in heme b binding.

Belongs to the peroxidase family. Peroxidase/catalase subfamily. In terms of assembly, homodimer or homotetramer. It depends on heme b as a cofactor. Formation of the three residue Trp-Tyr-Met cross-link is important for the catalase, but not the peroxidase activity of the enzyme.

The catalysed reaction is H2O2 + AH2 = A + 2 H2O. The enzyme catalyses 2 H2O2 = O2 + 2 H2O. Functionally, bifunctional enzyme with both catalase and broad-spectrum peroxidase activity. The protein is Catalase-peroxidase of Colwellia psychrerythraea (strain 34H / ATCC BAA-681) (Vibrio psychroerythus).